A 113-amino-acid chain; its full sequence is Cytochrome c (113 aa).

A1 is subject to N-acetylalanine. 3 residues coordinate heme c: C22, C25, and H26. N6,N6,N6-trimethyllysine is present on K80. Heme c is bound at residue M88. K94 carries the post-translational modification N6,N6,N6-trimethyllysine.

Belongs to the cytochrome c family. Post-translationally, binds 1 heme c group covalently per subunit.

The protein localises to the mitochondrion intermembrane space. Its function is as follows. Electron carrier protein. The oxidized form of the cytochrome c heme group can accept an electron from the heme group of the cytochrome c1 subunit of cytochrome reductase. Cytochrome c then transfers this electron to the cytochrome oxidase complex, the final protein carrier in the mitochondrial electron-transport chain. This Ginkgo biloba (Ginkgo) protein is Cytochrome c.